A 473-amino-acid chain; its full sequence is GTPase Der (473 aa).

EngA-type G domains lie at 3–167 (FTVA…GKDR) and 203–378 (LRVA…RVWN). GTP-binding positions include 9 to 16 (GRPNVGKS), 56 to 60 (DTAGL), 119 to 122 (NKSE), 209 to 216 (GRPNAGKS), 256 to 260 (DTAGM), and 321 to 324 (NKWD). Residues 379-463 (KRISTAKLNR…PIRIHFRSAE (85 aa)) enclose the KH-like domain.

It belongs to the TRAFAC class TrmE-Era-EngA-EngB-Septin-like GTPase superfamily. EngA (Der) GTPase family. As to quaternary structure, associates with the 50S ribosomal subunit.

In terms of biological role, GTPase that plays an essential role in the late steps of ribosome biogenesis. The polypeptide is GTPase Der (Rhizobium leguminosarum bv. trifolii (strain WSM2304)).